A 475-amino-acid polypeptide reads, in one-letter code: Stromelysin-1 (475 aa).

An N-terminal signal peptide occupies residues 1 to 17 (MKGLPVLLWLCTAVCSS). The propeptide at 18 to 97 (YPLHGSEEDA…PRCGVPDVGG (80 aa)) is activation peptide. The Cysteine switch motif lies at 88-95 (PRCGVPDV). Cys90 is a binding site for Zn(2+). A glycan (N-linked (GlcNAc...) asparagine) is linked at Asn118. Ca(2+) is bound by residues Asp122 and Asp156. 2 residues coordinate Zn(2+): His166 and Asp168. Asp173, Gly174, Gly176, and Val178 together coordinate Ca(2+). Residue His181 coordinates Zn(2+). Residues Gly188, Asn190, and Asp192 each contribute to the Ca(2+) site. Position 194 (His194) interacts with Zn(2+). Residues Asp196, Asp197, and Glu199 each coordinate Ca(2+). His216 contacts Zn(2+). Glu217 is an active-site residue. His220 and His226 together coordinate Zn(2+). 4 Hemopexin repeats span residues 285–334 (LPMC…WPSL), 335–381 (PSNM…GLPE), 383–431 (VQKI…FPGI), and 432–475 (GTKV…WFNC). Residues Cys288 and Cys475 are joined by a disulfide bond. Asp295 is a Ca(2+) binding site. Asp387 and Asp436 together coordinate Ca(2+).

This sequence belongs to the peptidase M10A family. Ca(2+) serves as cofactor. Requires Zn(2+) as cofactor.

The protein localises to the secreted. Its subcellular location is the extracellular space. It localises to the extracellular matrix. It carries out the reaction Preferential cleavage where P1', P2' and P3' are hydrophobic residues.. Its activity is regulated as follows. Inhibited by a synthetic peptide corresponding to the inhibitory cysteine switch motif. Inhibited by ethylenediaminetetraacetic acid (EDTA), 1,10-pheanthroline, 2-mecaptoethanol, dithiothreitol and metalloproteinase inhibitor protein TIMP. In terms of biological role, can degrade fibronectin, laminin, gelatins of type I, III, IV, and V; collagens III, IV, X, and IX, and cartilage proteoglycans. Activates procollagenase. Metalloproteinase with a rather broad substrate specificity that can degrade fibronectin, laminin, gelatins of type I, III, IV, and V; collagens III, IV, X, and IX, and cartilage proteoglycans. Activates different molecules including growth factors, plasminogen or other matrix metalloproteinases such as MMP9. Once released into the extracellular matrix (ECM), the inactive pro-enzyme is activated by the plasmin cascade signaling pathway. Also acts intracellularly. For example, in dopaminergic neurons, gets activated by the serine protease HTRA2 upon stress and plays a pivotal role in DA neuronal degeneration by mediating microglial activation and alpha-synuclein/SNCA cleavage. In addition, plays a role in immune response and possesses antiviral activity against various viruses. Mechanistically, translocates from the cytoplasm into the cell nucleus upon virus infection to influence NF-kappa-B activities. The protein is Stromelysin-1 (Mmp3) of Rattus norvegicus (Rat).